A 266-amino-acid chain; its full sequence is Decarboxylase tropJ (266 aa).

Residue glutamate 80 is the Proton acceptor of the active site. The Zn(2+) site is built by glutamate 80, histidine 99, histidine 101, and histidine 180.

The protein belongs to the aldolase class II family. Zn(2+) is required as a cofactor.

Its pathway is secondary metabolite biosynthesis. Functionally, decarboxylase; part of the gene cluster that mediates the biosynthesis of the tropolone class of fungal maleic anhydrides. The pathway begins with the synthesis of 3-methylorcinaldehyde by the non-reducing polyketide synthase (PKS) tropA. 3-methylorcinaldehyde is the substrate for the FAD-dependent monooxygenase tropB to yield a dearomatized hydroxycyclohexadione. The 2-oxoglutarate-dependent dioxygenase tropC then performs the oxidative ring expansion to provide the first tropolone metabolite stipitaldehyde. Trop D converts stipitaldehyde into stipitacetal which is in turn converted to stipitalide by the short-chain dehydrogenase/reductase tropE. The next steps involve tropF, tropG, tropH, tropI and tropJ to form successive tropolone maleic anhydrides including stipitaldehydic, stipitatonic and stipitatic acids. The chain is Decarboxylase tropJ from Talaromyces stipitatus (strain ATCC 10500 / CBS 375.48 / QM 6759 / NRRL 1006) (Penicillium stipitatum).